The primary structure comprises 502 residues: Maturase K (502 aa).

It belongs to the intron maturase 2 family. MatK subfamily.

Its subcellular location is the plastid. It localises to the chloroplast. Its function is as follows. Usually encoded in the trnK tRNA gene intron. Probably assists in splicing its own and other chloroplast group II introns. The protein is Maturase K of Brassica campestris (Field mustard).